The chain runs to 255 residues: SKA complex subunit 1 (255 aa).

Residue Ala-2 is modified to N-acetylalanine. Positions 49–91 (INELLNKLELEIQYQEQTNNSLKELCESLEEDYKDIEHLKENV) form a coiled coil. The tract at residues 92–132 (PSHLPQVTVTQSCVKGSDLDPEEPIKVEEPEPVKKPPKEQR) is flexiple loop that anchors MAPRE1. Positions 93–96 (SHLP) match the SXLP motif; mediates interaction with MAPRE1, targeting to microtubule plus ends, stabilization on kinetochores and is required for proper chromosome alignment to the metaphase plate motif. The segment at 106–131 (KGSDLDPEEPIKVEEPEPVKKPPKEQ) is disordered. Residues 114-131 (EPIKVEEPEPVKKPPKEQ) are compositionally biased toward basic and acidic residues. A binds microtubules and protein phosphatase PP1 subunit PPP1CA region spans residues 132–255 (RSIKEMPFIT…GGGLTRYVIT (124 aa)). Thr-157 is subject to Phosphothreonine; by AURKB. Position 242 is a phosphoserine; by AURKB (Ser-242).

This sequence belongs to the SKA1 family. Component of the SKA complex, composed of SKA1, SKA2 and SKA3. The SKA complex is a homodimer organized around a central W-shaped coiled-coil structure, formed by the interacting domains of SKA1, SKA2, and SKA3, each end of the 'W' is extended further by the C-terminal microtubule-binding domains of SKA1 and SKA3; the complex forms extended structures on microtubules. Interacts (via SXLP motif) with MAPRE1 (via C-terminus); the interaction is direct and stabilizes the kinetochore-microtubule attachment of the SKA1 complex. Interacts (via C-terminus) with protein phosphatase PP1 subunit PPP1CA; the interaction is direct and required for recruitment of PPP1CA to the kinetochore. Interacts with the NDC80 complex; the interaction is required to establish kinetochore-microtubule end-on attachments. Phosphorylated by AURKB at Thr-157 and Ser-242 which negatively regulates the association of the SKA complex with kinetochores to allow correction of aberrant kinetochore-microtubule interactions and promote mitotic sister chromatid biorientation.

The protein localises to the cytoplasm. The protein resides in the cytoskeleton. It localises to the spindle. It is found in the chromosome. Its subcellular location is the centromere. The protein localises to the kinetochore. The protein resides in the microtubule organizing center. It localises to the centrosome. In terms of biological role, component of the SKA complex, a microtubule plus end-binding complex of the outer kinetochore that stabilizes spindle microtubule-kinetochore attachments, promotes alignment of chromosomes at the mitotic spindle equator (chromosome congression) and assists suppression of the spindle assembly checkpoint. Kinetochores, consisting of a centromere-associated inner segment and a microtubule-contacting outer segment, play a crucial role in chromosome segregation by mediating the physical connection between centromeric DNA and spindle microtubules. The outer kinetochore is made up of the ten-subunit KMN network complex, comprising the MIS12, NDC80 and KNL1 complexes, and auxiliary microtubule-associated components such as the SKA complex; together they connect the outer kinetochore with the inner kinetochore, bind microtubules, and mediate interactions with mitotic checkpoint proteins that delay anaphase until chromosomes are bioriented on the spindle. The SKA complex is loaded onto bioriented kinetochores and it facilitates chromosome congression by stabilizing microtubules together with MAPRE1, and end-on attachment of the NDC80 complex to depolymerizing spindle microtubules, thereby assisting the poleward-moving kinetochore in withstanding microtubule pulling forces. The complex associates with dynamic microtubule plus-ends and can track both depolymerizing and elongating microtubules. The complex recruits protein phosphatase 1 (PP1) to the kinetochore in prometaphase and metaphase, to oppose spindle assembly checkpoint signaling and promote the onset of anaphase. In the complex, it mediates interactions with microtubules. It also stimulates AURKB/Aurora B catalytic activity. During meiosis the SKA complex stabilizes the meiotic spindle and is required for its migration to the cortex. This Homo sapiens (Human) protein is SKA complex subunit 1 (SKA1).